The chain runs to 344 residues: Polyhomeotic-like protein 2 (344 aa).

Over residues 1 to 23 (MTSGNGSSPVPTAATGNRTQNGE) the composition is skewed to polar residues. The segment at 1-28 (MTSGNGSSPVPTAATGNRTQNGENKPPQ) is disordered. An HD1 motif is present at residues 25–53 (KPPQAVVKPQILTHFIEGFVIQEGAQPFP). An FCS-type zinc finger spans residues 114–148 (GDGDPPKLKCELCGRVDFEYKFKRSKRFCSMACAK). The Zn(2+) site is built by Cys123, Cys126, Cys142, and Cys146. A disordered region spans residues 165–269 (RSKLQKPTVA…LHSRDPIAMS (105 aa)). The span at 173–183 (VAKHARRRSRK) shows a compositional bias: basic residues. Polar residues predominate over residues 216-233 (KLSNSQEDSSRCSDNSSY). Low complexity predominate over residues 234-248 (EEPLSPMSASSSLSR). Residues 280 to 344 (WNVEDVYDFV…YARISMLKDS (65 aa)) form the SAM domain.

As to quaternary structure, component of a PRC1-like complex.

It localises to the nucleus. Functionally, component of a Polycomb group (PcG) multiprotein PRC1-like complex, a complex class required to maintain the transcriptionally repressive state of many genes, including Hox genes, throughout development. PcG PRC1 complex acts via chromatin remodeling and modification of histones; it mediates monoubiquitination of histone H2A 'Lys-119', rendering chromatin heritably changed in its expressibility. The chain is Polyhomeotic-like protein 2 (phc2) from Xenopus laevis (African clawed frog).